The following is a 2135-amino-acid chain: Protein SUBSTANDARD STARCH GRAIN 4, chloroplastic (2135 aa).

Low complexity-rich tracts occupy residues 1 to 10 (MSHCLRASPF) and 72 to 84 (QHQP…RQQQ). The transit peptide at 1–42 (MSHCLRASPFLSPPPPLLHPSRRRRHRQGGCIHTSPGTRPLV) directs the protein to the chloroplast. Disordered stretches follow at residues 1–44 (MSHC…LVAR) and 58–89 (SDSS…PPPP). The Stromal portion of the chain corresponds to 43-104 (ARARFDPPPL…ASLAPLWREG (62 aa)). A helical transmembrane segment spans residues 105-125 (LFLVRCSVFAAALSVAAALSW). Residues 126 to 2135 (YAQLRARSFV…LFEYSATSQG (2010 aa)) lie on the Chloroplast intermembrane side of the membrane. The segment covering 361 to 370 (RRRYRRKAHS) has biased composition (basic residues). Disordered stretches follow at residues 361–382 (RRRY…SSQQ), 401–492 (SGNP…QVSE), and 1843–1869 (FLGS…SFKP). 3 stretches are compositionally biased toward polar residues: residues 373–382 (ISDTDNSSQQ), 454–490 (NFAS…NEQV), and 1846–1856 (SLSTSPDGQQS). The span at 1857 to 1866 (ETERTPEHGS) shows a compositional bias: basic and acidic residues.

This sequence belongs to the TamB family. Part of the TIC complex, which can interact with components of the TOC complex to form a larger import complex. In terms of tissue distribution, highly expressed in third leaf and developing seeds. Expressed in anthers, pistils, flag leaves and young panicles.

It localises to the plastid. It is found in the chloroplast inner membrane. The protein resides in the chloroplast intermembrane space. The protein localises to the chloroplast. Its subcellular location is the amyloplast. Functionally, part of the inner chloroplast membrane translocon complex (TIC) which associates with the outer chloroplast membrane translocon complex (TOC) and forms a supercomplex involved in protein precursor import into the chloroplast stroma. Required for the regulation of starch granule size in amyloplasts. The polypeptide is Protein SUBSTANDARD STARCH GRAIN 4, chloroplastic (Oryza sativa subsp. japonica (Rice)).